We begin with the raw amino-acid sequence, 323 residues long: Prenyl transferase (323 aa).

Positions 46, 49, and 81 each coordinate isopentenyl diphosphate. Mg(2+) is bound by residues D88 and D92. Position 97 (R97) interacts with an all-trans-polyprenyl diphosphate. R98 contacts isopentenyl diphosphate. Residues K174, T175, and Q212 each coordinate an all-trans-polyprenyl diphosphate.

It belongs to the FPP/GGPP synthase family. Mg(2+) serves as cofactor.

It localises to the plastid. Its subcellular location is the chloroplast. In terms of biological role, possible role in synthesis of the nonaprenyl side chain of plastoquinone or in synthesis of other prenyl chains such as undekaprenyl pyrophosphate. The sequence is that of Prenyl transferase (preA) from Porphyra purpurea (Red seaweed).